A 150-amino-acid chain; its full sequence is Monooxygenase nsrS (150 aa).

It belongs to the avfA family.

It participates in secondary metabolite biosynthesis. Monooxygenase; part of the gene cluster that mediates the biosynthesis of the tetrahydroxanthone dimer neosartorin, which exhibits antibacterial activity. The two different monomeric units appear to be synthesized by the same set of enzymes, among which the Baeyer-Villiger monooxygenase nsrF is the key enzyme for the divergence of the biosynthetic routes. The pathway begins with the synthesis of atrochrysone thioester by the polyketide synthase nsrB. The atrochrysone carboxyl ACP thioesterase nsrC then breaks the thioester bond and releases the atrochrysone carboxylic acid from AacuL. Atrochrysone carboxylic acid is decarboxylated by the decarboxylase nsrE, and oxidized by the anthrone oxygenase nsrD to yield emodin. Emodin is then reduced to emodin hydroquinone by the oxidoreductase nsrR. A-ring reduction by the short chain dehydrogenase nsrJ, dehydration by the scytalone dehydratase-like protein nsrI and probable spontaneous re-oxidation, results in overall deoxygenation to chrysophanol. The Baeyer-Villiger monooxygenase nsrF accepts chrysophanol as a substrate to insert one oxygen atom at two different positions to yield the precursors of both monomric units. NsrF is promiscuous/flexible in interacting with the 2 (non methylated and methylated) aromatic rings of chrysophanol, thus diverging the biosynthetic pathway at this point. After the hydrolysis of the lactones, methylesterification by the methyltransferase nsrG yields respectively moniliphenone and 2,2',6'-trihydroxy-4-methyl-6-methoxya-cyldiphenylmethanone. The next steps are the hydroxylation by the FAD-dependent monooxygenase nsrK, followed by isomerization by the monooxygenase nsrQ. The short chain dehydrogenase/reductase nsrO then catalyzes the C-5 ketoreduction to give the xanthone skeleton of blennolide C and 5-acetylblennolide A. The acetyltransferase nsrL has a strict substrate specificity and uses only blennolide A but not blennolide C to yield 5-acetylblennolide A as the single-acetylated product. In the final step of the biosynthesis, the heterodimerization of the 2 xanthones, blennolide C and 5-acetylblennolide A, is catalyzed by the cytochrome P450 monooxygenase nsrP. NsrP can utilize at least three different xanthones as its substrates to perform the dimerization reaction. This chain is Monooxygenase nsrS, found in Aspergillus novofumigatus (strain IBT 16806).